We begin with the raw amino-acid sequence, 123 residues long: Small ribosomal subunit protein uS12 (123 aa).

This sequence belongs to the universal ribosomal protein uS12 family. As to quaternary structure, part of the 30S ribosomal subunit. Contacts proteins S8 and S17. May interact with IF1 in the 30S initiation complex.

With S4 and S5 plays an important role in translational accuracy. Its function is as follows. Interacts with and stabilizes bases of the 16S rRNA that are involved in tRNA selection in the A site and with the mRNA backbone. Located at the interface of the 30S and 50S subunits, it traverses the body of the 30S subunit contacting proteins on the other side and probably holding the rRNA structure together. The combined cluster of proteins S8, S12 and S17 appears to hold together the shoulder and platform of the 30S subunit. This is Small ribosomal subunit protein uS12 from Corynebacterium diphtheriae (strain ATCC 700971 / NCTC 13129 / Biotype gravis).